Consider the following 246-residue polypeptide: Protein DEHYDRATION-INDUCED 19 homolog 3 (246 aa).

A disordered region spans residues 185 to 230 (ERSKAPVPIPDDTSIHKDTPAQPWESRIDSSLTSEEREQKRKQATD). The segment covering 218 to 229 (SEEREQKRKQAT) has biased composition (basic and acidic residues).

Belongs to the Di19 family.

The polypeptide is Protein DEHYDRATION-INDUCED 19 homolog 3 (DI19-3) (Oryza sativa subsp. japonica (Rice)).